A 144-amino-acid chain; its full sequence is Ribonuclease VapC37 (144 aa).

The region spanning 3-137 (IVDANVLLYA…DFGRFEGVRW (135 aa)) is the PINc domain. Mg(2+) is bound by residues Asp-5 and Asp-90.

Belongs to the PINc/VapC protein family. Mg(2+) is required as a cofactor.

The protein localises to the secreted. Its function is as follows. Probable toxic component of a type II toxin-antitoxin (TA) system. An RNase. Upon expression in M.smegmatis inhibits colony formation. The putative cognate antitoxin is VapB37. The polypeptide is Ribonuclease VapC37 (Mycobacterium tuberculosis (strain ATCC 25618 / H37Rv)).